Here is a 133-residue protein sequence, read N- to C-terminus: Phosphomevalonate dehydratase small subunit (133 aa).

The active-site Proton acceptor is the serine 62.

The protein belongs to the AcnX type II small subunit family. In terms of assembly, heterodimer composed of a large subunit (PMDh-L) and a small subunit (PMDh-S).

It catalyses the reaction (R)-5-phosphomevalonate = (2E)-3-methyl-5-phosphooxypent-2-enoate + H2O. Its pathway is isoprenoid biosynthesis; isopentenyl diphosphate biosynthesis via mevalonate pathway. In terms of biological role, component of a hydro-lyase that catalyzes the dehydration of mevalonate 5-phosphate (MVA5P) to form trans-anhydromevalonate 5-phosphate (tAHMP). Involved in the archaeal mevalonate (MVA) pathway, which provides fundamental precursors for isoprenoid biosynthesis, such as isopentenyl diphosphate (IPP) and dimethylallyl diphosphate (DMAPP). This is Phosphomevalonate dehydratase small subunit from Thermococcus kodakarensis (strain ATCC BAA-918 / JCM 12380 / KOD1) (Pyrococcus kodakaraensis (strain KOD1)).